Consider the following 63-residue polypeptide: Kappa-theraphotoxin-Gr3a (63 aa).

Positions 1–21 (MKTSVFVLVLGLVLLFAVSFA) are cleaved as a signal peptide. The propeptide occupies 22–29 (TEMEESAR). Disulfide bonds link Cys31–Cys45, Cys38–Cys50, and Cys44–Cys57.

It belongs to the neurotoxin 10 (Hwtx-1) family. 63 (VsTx1) subfamily. As to expression, expressed by the venom gland.

The protein resides in the secreted. Functionally, inhibits sodium channels Nav1.7/SCN9A and potassium channels Kv11.1/KCNH2. Also binds the voltage-sensor domain of the potassium channel KvAP (from the archaeon Aeropyrum pernix) with very slow apparent binding kinetics and affects channel gating. Reaches its target by dynamically partitioning into anionic or zwitterionic headgroup lipid membranes. May bind to the open state of KvAP. The sequence is that of Kappa-theraphotoxin-Gr3a from Grammostola rosea (Chilean rose tarantula).